A 276-amino-acid polypeptide reads, in one-letter code: Diaminopimelate epimerase (276 aa).

Positions 13, 46, and 66 each coordinate substrate. The Proton donor role is filled by cysteine 75. Residues 76 to 77 (GN), asparagine 159, asparagine 192, and 210 to 211 (ER) contribute to the substrate site. Cysteine 219 acts as the Proton acceptor in catalysis. Position 220–221 (220–221 (GS)) interacts with substrate.

This sequence belongs to the diaminopimelate epimerase family. Homodimer.

It is found in the cytoplasm. The enzyme catalyses (2S,6S)-2,6-diaminopimelate = meso-2,6-diaminopimelate. The protein operates within amino-acid biosynthesis; L-lysine biosynthesis via DAP pathway; DL-2,6-diaminopimelate from LL-2,6-diaminopimelate: step 1/1. Functionally, catalyzes the stereoinversion of LL-2,6-diaminopimelate (L,L-DAP) to meso-diaminopimelate (meso-DAP), a precursor of L-lysine and an essential component of the bacterial peptidoglycan. The protein is Diaminopimelate epimerase of Vibrio vulnificus (strain CMCP6).